Here is a 277-residue protein sequence, read N- to C-terminus: UPF0276 protein PP_2398 (277 aa).

The protein belongs to the UPF0276 family.

The sequence is that of UPF0276 protein PP_2398 from Pseudomonas putida (strain ATCC 47054 / DSM 6125 / CFBP 8728 / NCIMB 11950 / KT2440).